Reading from the N-terminus, the 400-residue chain is Egl nine homolog 1 (400 aa).

A2 is modified (N-acetylalanine). The required for nuclear export stretch occupies residues 6 to 20 (GGPGVLSASERDRQY). S12 carries the post-translational modification Phosphoserine. The Zn(2+) site is built by C21, C24, C33, C36, C42, H46, H54, and C58. Residues 21-58 (CELCGKMENLLRCGRCRSSFYCCKEHQRQDWKKHKLVC) form an MYND-type; atypical zinc finger. Positions 62-74 (EAPRAQPAPAQPR) are enriched in low complexity. The disordered stretch occupies residues 62-161 (EAPRAQPAPA…PGGGLRPNGQ (100 aa)). S114 is subject to Phosphoserine. A compositionally biased stretch (gly residues) spans 142 to 157 (AGGGPGEALSPGGGLR). S-nitrosocysteine is present on residues C178 and C185. Residues 218–228 (VSQKSDSSKDI) form a beta(2)beta(3) 'finger-like' loop region. The Fe2OG dioxygenase domain maps to 271–369 (GRTKAMVACY…RYAITVWYFD (99 aa)). Residue C279 is modified to S-nitrosocysteine. Residues H290 and D292 each coordinate Fe cation. An S-nitrosocysteine mark is found at C300 and C303. A Fe cation-binding site is contributed by H351. A 2-oxoglutarate-binding site is contributed by R360.

Monomer. Interacts with ING4; the interaction inhibits the hydroxylation of HIF alpha proteins. Interacts with PTGES3 (via PXLE motif); thereby recruiting EGLN1 to the HSP90 pathway to facilitate HIF alpha proteins hydroxylation. Interacts with LIMD1. Found in a complex composed of LIMD1, VHL, EGLN1/PHD2, ELOB and CUL2. Interacts with EPAS1. Interacts with CBFA2T3 and HIF1A. Fe(2+) is required as a cofactor. L-ascorbate serves as cofactor. S-nitrosylation inhibits the enzyme activity up to 60% under aerobic conditions. Chelation of Fe(2+) has no effect on the S-nitrosylation. It is uncertain whether nitrosylation occurs on Cys-300 or Cys-303. In terms of tissue distribution, expressed in heart, brain liver, skeletal muscle and kidney. Low levels were detected in the lung. Constitutively expressed during differentiation of C2C12 skeletal myocytes.

It is found in the cytoplasm. The protein localises to the nucleus. The enzyme catalyses L-prolyl-[hypoxia-inducible factor alpha subunit] + 2-oxoglutarate + O2 = trans-4-hydroxy-L-prolyl-[hypoxia-inducible factor alpha subunit] + succinate + CO2. Cellular oxygen sensor that catalyzes, under normoxic conditions, the post-translational formation of 4-hydroxyproline in hypoxia-inducible factor (HIF) alpha proteins. Hydroxylates a specific proline found in each of the oxygen-dependent degradation (ODD) domains (N-terminal, NODD, and C-terminal, CODD) of HIF1A. Also hydroxylates HIF2A. Has a preference for the CODD site for both HIF1A and HIF1B. Hydroxylated HIFs are then targeted for proteasomal degradation via the von Hippel-Lindau ubiquitination complex. Under hypoxic conditions, the hydroxylation reaction is attenuated allowing HIFs to escape degradation resulting in their translocation to the nucleus, heterodimerization with HIF1B, and increased expression of hypoxy-inducible genes. EGLN1 is the most important isozyme under normoxia and, through regulating the stability of HIF1, involved in various hypoxia-influenced processes such as angiogenesis in retinal and cardiac functionality. Target proteins are preferentially recognized via a LXXLAP motif. This is Egl nine homolog 1 (Egln1) from Mus musculus (Mouse).